A 57-amino-acid chain; its full sequence is Large ribosomal subunit protein bL32 (57 aa).

Basic residues predominate over residues 1-19 (MAVPKRRMSRSNTRSRRSQ). The segment at 1–22 (MAVPKRRMSRSNTRSRRSQWKA) is disordered.

Belongs to the bacterial ribosomal protein bL32 family.

The chain is Large ribosomal subunit protein bL32 from Rhodococcus jostii (strain RHA1).